The chain runs to 536 residues: Apolipoprotein N-acyltransferase (536 aa).

The next 7 membrane-spanning stretches (helical) occupy residues 10-30, 42-62, 76-96, 107-127, 136-158, 181-201, and 212-232; these read IASGIILAWGWKRAVIALLAG, AWPVLFITFPIAVWLIDGSAA, WWFGFGYFVPGLYWIGYAFLV, AAICGLPAYLALFTALGFALA, LRILSLAVSLTISEWLRGHLLTG, IGIWGLTLLTVAIFASPAVLI, and AVPAMALGVLAAMTVFGGIRL. The region spanning 248–501 is the CN hydrolase domain; the sequence is MQPNLPQDAR…EGVLDSGLPA (254 aa). The Proton acceptor role is filled by Glu295. Residue Lys360 is part of the active site. The Nucleophile role is filled by Cys413. A helical transmembrane segment spans residues 509-529; the sequence is ARVGELPAAVLVALVMMLVLL.

Belongs to the CN hydrolase family. Apolipoprotein N-acyltransferase subfamily.

It localises to the cell inner membrane. The catalysed reaction is N-terminal S-1,2-diacyl-sn-glyceryl-L-cysteinyl-[lipoprotein] + a glycerophospholipid = N-acyl-S-1,2-diacyl-sn-glyceryl-L-cysteinyl-[lipoprotein] + a 2-acyl-sn-glycero-3-phospholipid + H(+). It functions in the pathway protein modification; lipoprotein biosynthesis (N-acyl transfer). Catalyzes the phospholipid dependent N-acylation of the N-terminal cysteine of apolipoprotein, the last step in lipoprotein maturation. This is Apolipoprotein N-acyltransferase from Rhodopseudomonas palustris (strain ATCC BAA-98 / CGA009).